The sequence spans 412 residues: Ribosomal RNA large subunit methyltransferase G (412 aa).

Positions 386–412 (KAEPHENGESSSDTPNPQSSLYGGVKR) are disordered. The span at 394–406 (ESSSDTPNPQSSL) shows a compositional bias: polar residues.

It belongs to the methyltransferase superfamily. RlmG family.

It is found in the cytoplasm. It carries out the reaction guanosine(1835) in 23S rRNA + S-adenosyl-L-methionine = N(2)-methylguanosine(1835) in 23S rRNA + S-adenosyl-L-homocysteine + H(+). Specifically methylates the guanine in position 1835 (m2G1835) of 23S rRNA. This Shewanella sediminis (strain HAW-EB3) protein is Ribosomal RNA large subunit methyltransferase G.